We begin with the raw amino-acid sequence, 118 residues long: DNA-binding protein MmarC5_1518 (118 aa).

Residues 1–12 (MNPEEIRQRRLQ) show a composition bias toward basic and acidic residues. The interval 1–35 (MNPEEIRQRRLQEMQAKAQEQGAEDPEAQRQAQEQ) is disordered.

It belongs to the PDCD5 family.

The protein is DNA-binding protein MmarC5_1518 of Methanococcus maripaludis (strain C5 / ATCC BAA-1333).